Consider the following 462-residue polypeptide: Cysteine--tRNA ligase (462 aa).

Cys29 serves as a coordination point for Zn(2+). Positions 31–41 match the 'HIGH' region motif; it reads MTVYDLCHLGH. 3 residues coordinate Zn(2+): Cys217, His242, and Glu246. The short motif at 274–278 is the 'KMSKS' region element; that stretch reads KMSKS. Lys277 lines the ATP pocket.

This sequence belongs to the class-I aminoacyl-tRNA synthetase family. In terms of assembly, monomer. Requires Zn(2+) as cofactor.

Its subcellular location is the cytoplasm. The enzyme catalyses tRNA(Cys) + L-cysteine + ATP = L-cysteinyl-tRNA(Cys) + AMP + diphosphate. The sequence is that of Cysteine--tRNA ligase from Polaromonas sp. (strain JS666 / ATCC BAA-500).